The sequence spans 691 residues: DNA ligase (691 aa).

Residues 1 to 22 (MTTAEDVAGNPYISDPRTDFES) are disordered. Residues 59 to 63 (DRAYD), 107 to 108 (SI), and Glu137 each bind NAD(+). The active-site N6-AMP-lysine intermediate is Lys139. Residues Arg160, Glu196, Lys311, and Lys335 each coordinate NAD(+). Cys426, Cys429, Cys442, and Cys448 together coordinate Zn(2+). The 84-residue stretch at 608 to 691 (TDGDALDGQT…EELLDDAGVL (84 aa)) folds into the BRCT domain. The interval 637 to 667 (ERNDGSATSSVSGNTDYLVLGDNPGQRKQDD) is disordered. Over residues 641-651 (GSATSSVSGNT) the composition is skewed to polar residues.

Belongs to the NAD-dependent DNA ligase family. LigA subfamily. Mg(2+) is required as a cofactor. The cofactor is Mn(2+).

The enzyme catalyses NAD(+) + (deoxyribonucleotide)n-3'-hydroxyl + 5'-phospho-(deoxyribonucleotide)m = (deoxyribonucleotide)n+m + AMP + beta-nicotinamide D-nucleotide.. DNA ligase that catalyzes the formation of phosphodiester linkages between 5'-phosphoryl and 3'-hydroxyl groups in double-stranded DNA using NAD as a coenzyme and as the energy source for the reaction. It is essential for DNA replication and repair of damaged DNA. This is DNA ligase from Haloarcula marismortui (strain ATCC 43049 / DSM 3752 / JCM 8966 / VKM B-1809) (Halobacterium marismortui).